Reading from the N-terminus, the 22-residue chain is Bacteriocin serracin-P 23 kDa subunit (22 aa).

Major component of a prophage tail tube. Its function is as follows. Antibacterial activity against Gram-negative bacterium E.amylovora. In Serratia plymuthica, this protein is Bacteriocin serracin-P 23 kDa subunit.